We begin with the raw amino-acid sequence, 224 residues long: uncharacterized protein (224 aa).

7 residues coordinate Zn(2+): H57, H59, D61, H62, H138, D162, and H203.

The protein belongs to the metallo-beta-lactamase superfamily. Glyoxalase II family. The cofactor is Zn(2+).

This is an uncharacterized protein from Mycobacterium tuberculosis (strain CDC 1551 / Oshkosh).